We begin with the raw amino-acid sequence, 313 residues long: Olfactory receptor 1J2 (313 aa).

The Extracellular portion of the chain corresponds to 1 to 25; the sequence is MSPENQSSVSEFLLLGLPIRPEQQA. The N-linked (GlcNAc...) asparagine glycan is linked to Asn-5. Residues 26–49 form a helical membrane-spanning segment; it reads VFFTLFLGMYLTTVLGNLLIMLLI. Over 50–57 the chain is Cytoplasmic; that stretch reads QLDSHLHT. A helical transmembrane segment spans residues 58–79; that stretch reads PMYFFLSHLALTDISFSSVTVP. Residues 80–100 are Extracellular-facing; the sequence is KMLMDMRTKYKSILYEECISQ. An intrachain disulfide couples Cys-97 to Cys-189. A helical transmembrane segment spans residues 101–120; it reads MYFFIFFTDLDSFLITSMAY. Residues 121–139 are Cytoplasmic-facing; it reads DRYVAICHPLHYTVIMREE. Residues 140–158 traverse the membrane as a helical segment; sequence LCVFLVAVSWILSCASSLS. Residues 159 to 196 lie on the Extracellular side of the membrane; it reads HTLLLTRLSFCAANTIPHVFCDLAALLKLSCSDIFLNE. The chain crosses the membrane as a helical span at residues 197 to 219; the sequence is LVMFTVGVVVITLPFMCILVSYG. Topologically, residues 220 to 236 are cytoplasmic; it reads YIGATILRVPSTKGIHK. The chain crosses the membrane as a helical span at residues 237 to 259; the sequence is ALSTCGSHLSVVSLYYGSIFGQY. Over 260–272 the chain is Extracellular; it reads LFPTVSSSIDKDV. The chain crosses the membrane as a helical span at residues 273-292; that stretch reads IVALMYTVVTPMLNPFIYSL. Residues 293–313 lie on the Cytoplasmic side of the membrane; the sequence is RNRDMKEALGKLFSRATFFSW.

Belongs to the G-protein coupled receptor 1 family.

The protein localises to the cell membrane. Odorant receptor. This chain is Olfactory receptor 1J2 (OR1J2), found in Homo sapiens (Human).